A 379-amino-acid chain; its full sequence is Cytochrome b (379 aa).

4 helical membrane-spanning segments follow: residues 33 to 53, 77 to 98, 113 to 133, and 178 to 198; these read FGSL…FLAM, WLIR…FIHV, WNIG…GYVL, and FFAF…VHLL. The heme b site is built by His83 and His97. The heme b site is built by His182 and His196. His201 serves as a coordination point for a ubiquinone. 4 helical membrane-spanning segments follow: residues 226 to 246, 288 to 308, 320 to 340, and 347 to 367; these read TKDL…ALFF, LGGV…PLLN, VTQV…WIGG, and FTMI…ILIP.

This sequence belongs to the cytochrome b family. The cytochrome bc1 complex contains 11 subunits: 3 respiratory subunits (MT-CYB, CYC1 and UQCRFS1), 2 core proteins (UQCRC1 and UQCRC2) and 6 low-molecular weight proteins (UQCRH/QCR6, UQCRB/QCR7, UQCRQ/QCR8, UQCR10/QCR9, UQCR11/QCR10 and a cleavage product of UQCRFS1). This cytochrome bc1 complex then forms a dimer. Heme b serves as cofactor.

It localises to the mitochondrion inner membrane. In terms of biological role, component of the ubiquinol-cytochrome c reductase complex (complex III or cytochrome b-c1 complex) that is part of the mitochondrial respiratory chain. The b-c1 complex mediates electron transfer from ubiquinol to cytochrome c. Contributes to the generation of a proton gradient across the mitochondrial membrane that is then used for ATP synthesis. This is Cytochrome b (MT-CYB) from Akodon lutescens puer (Altiplano grass mouse).